The sequence spans 266 residues: MKTFAAYVIIACLSSTALAGSITENTSWNKEFSAEAVNGVFVLCKSSSKSCATNDLARASKEYLPASTFKIPNAIIGLETGVIKNEHQVFKWDGKPRAMKQWERDLTLRGAIQVSAVPVFQQIAREVGEVRMQKYLKKFSYGSQNISGGIDKFWLEDQLRISAVNQVEFLESLYLNKLSASKENQLIVKEALVTEAAPEYLVHSKTGFSGVGTESNPGVAWWVGWVEKETEVYFFAFNMDIDNESKLPLRKSIPTKIMESEGIIGG.

A signal peptide spans 1-20 (MKTFAAYVIIACLSSTALAG). Residue Ser-67 is the Acyl-ester intermediate of the active site. Lys-70 bears the N6-carboxylysine mark. Residue 205-207 (KTG) coordinates substrate.

This sequence belongs to the class-D beta-lactamase family.

It catalyses the reaction a beta-lactam + H2O = a substituted beta-amino acid. In terms of biological role, hydrolyzes carbenicillin, oxacillin and cephalosporin. Does not hydrolyze cefoxitin or carbapenems. This is Beta-lactamase OXA-11 (bla) from Pseudomonas aeruginosa.